Consider the following 187-residue polypeptide: Nucleoside-triphosphatase THEP1 (187 aa).

Residues 9–16 (GRPGVGKT) and 100–107 (LIAIDEIG) each bind ATP.

The protein belongs to the THEP1 NTPase family.

The catalysed reaction is a ribonucleoside 5'-triphosphate + H2O = a ribonucleoside 5'-diphosphate + phosphate + H(+). Its function is as follows. Has nucleotide phosphatase activity towards ATP, GTP, CTP, TTP and UTP. May hydrolyze nucleoside diphosphates with lower efficiency. This chain is Nucleoside-triphosphatase THEP1, found in Hyperthermus butylicus (strain DSM 5456 / JCM 9403 / PLM1-5).